The chain runs to 372 residues: Cytochrome b (372 aa).

The next 4 membrane-spanning stretches (helical) occupy residues 25-45 (FGSMLLTCSALQIMTGFFLSM), 69-90 (WMMQNLHAIGASMFFICVYIHV), 105-125 (WLSGTTLLIMLMATAFFGYVL), and 170-190 (FFALHFILPFGIISLSSLHIM). Heme b-binding residues include His75 and His89. His174 and His188 together coordinate heme b. Position 193 (His193) interacts with a ubiquinone. The next 4 helical transmembrane spans lie at 218–238 (YKDLFMISSMIMIMLLTISFI), 280–300 (LGGALALAMSITILLTVPFTH), 312–332 (FMQLMFWTLVTTFMIITWTAT), and 339–358 (YTMISQVTSSLYFMFFMSNP).

It belongs to the cytochrome b family. In terms of assembly, the cytochrome bc1 complex contains 3 respiratory subunits (MT-CYB, CYC1 and UQCRFS1), 2 core proteins (UQCRC1 and UQCRC2) and probably 6 low-molecular weight proteins. The cofactor is heme b.

The protein localises to the mitochondrion inner membrane. In terms of biological role, component of the ubiquinol-cytochrome c reductase complex (complex III or cytochrome b-c1 complex) that is part of the mitochondrial respiratory chain. The b-c1 complex mediates electron transfer from ubiquinol to cytochrome c. Contributes to the generation of a proton gradient across the mitochondrial membrane that is then used for ATP synthesis. The chain is Cytochrome b (MT-CYB) from Acrantophis dumerili (Dumeril's ground boa).